We begin with the raw amino-acid sequence, 271 residues long: Phosphate import ATP-binding protein PstB (271 aa).

The ABC transporter domain occupies 24 to 266; sequence MIGQDVSVYY…PDDPRTQDYI (243 aa). 56 to 63 contributes to the ATP binding site; that stretch reads GPSGCGKS.

Belongs to the ABC transporter superfamily. Phosphate importer (TC 3.A.1.7) family. The complex is composed of two ATP-binding proteins (PstB), two transmembrane proteins (PstC and PstA) and a solute-binding protein (PstS).

It localises to the cell inner membrane. It catalyses the reaction phosphate(out) + ATP + H2O = ADP + 2 phosphate(in) + H(+). In terms of biological role, part of the ABC transporter complex PstSACB involved in phosphate import. Responsible for energy coupling to the transport system. The protein is Phosphate import ATP-binding protein PstB of Rhizobium etli (strain ATCC 51251 / DSM 11541 / JCM 21823 / NBRC 15573 / CFN 42).